The sequence spans 128 residues: Holin-like protein CidA (128 aa).

4 consecutive transmembrane segments (helical) span residues 4-24, 27-46, 59-79, and 88-108; these read LLLTVIQIALLFIFARLINWV, ALHINIPGSIIGIVILFTLL, GAAWLLGELLLFFIPSAVGVI, and FGVSILLVVVISTFVVMVSTG.

The protein belongs to the CidA/LrgA family. CidA subfamily.

It is found in the cell membrane. In terms of biological role, increases the activity of extracellular murein hydrolases possibly by mediating their export via hole formation. Inhibited by the antiholin-like proteins LrgAB. In an unstressed cell, the LrgAB products probably inhibit the function of the CidA protein. When a cell is stressed by the addition of antibiotics or by other factors in the environment, CidA possibly oligomerizes within the bacterial cell membrane, creating lesions that disrupt the proton motive force, which in turn results in loss of cell viability. These lesions are also hypothesized to regulate the subsequent cell lysis by either allowing the murein hydrolases access to the cell wall substrate and/or regulating their activity by a possible change in the cell wall pH that results from loss of membrane potential. The protein is Holin-like protein CidA of Bacillus velezensis (strain DSM 23117 / BGSC 10A6 / LMG 26770 / FZB42) (Bacillus amyloliquefaciens subsp. plantarum).